A 411-amino-acid polypeptide reads, in one-letter code: MVLSQRQREELNKAIADYLASNGFMEALESFKKETDMPGDIDKKYAGLLEKKWTSVIRLQKKVMDLEGRLAEAEKEYISGTPSREKRSPTEWIPRPPERSALLGHRAPITRVLFHPVYSVVVSASEDASIKVWDYETGDFERTIKGHTDSVQDIAFDHTGQFLASCSADMTIKLWDFKSYECLRTMHGHDHNVSSVCFLPSGDHVVSCSRDKSIKMWEVATGYCVRTFTGHRDWVRMVRVNSDGSLLASCSNDQTVRVWVVGTKECKLELREHDHVVECVAWAPAHAQLCGAAGDSNRRPGAGGAQGTGPFLVSGSRDKTIKVWDVSTGLALFTLVGHDNWVRGVKFHPGGKYLLSASDDKTLRVWELAHQRCCKTLDAHSHFCTSLDFHRTAPYVVTGSVDQTVKVWECR.

The LisH domain maps to 7-39 (QREELNKAIADYLASNGFMEALESFKKETDMPG). The stretch at 54-80 (TSVIRLQKKVMDLEGRLAEAEKEYISG) forms a coiled coil. The span at 77 to 89 (YISGTPSREKRSP) shows a compositional bias: basic and acidic residues. The segment at 77 to 96 (YISGTPSREKRSPTEWIPRP) is disordered. WD repeat units follow at residues 104-145 (GHRA…RTIK), 146-187 (GHTD…RTMH), 188-227 (GHDH…CVRT), 230-269 (GHRD…CKLE), 272-334 (EHDH…ALFT), 337-376 (GHDN…CCKT), and 379-411 (AHSH…WECR).

This sequence belongs to the WD repeat LIS1/nudF family.

Its subcellular location is the cytoplasm. It localises to the cytoskeleton. The protein resides in the microtubule organizing center. The protein localises to the centrosome. Functionally, positively regulates the activity of the minus-end directed microtubule motor protein dynein. May enhance dynein-mediated microtubule sliding by targeting dynein to the microtubule plus end. Required for several dynein- and microtubule-dependent processes. This Ixodes scapularis (Black-legged tick) protein is Lissencephaly-1 homolog.